Here is a 529-residue protein sequence, read N- to C-terminus: Bifunctional purine biosynthesis protein PurH (529 aa).

The MGS-like domain maps to 1-148; the sequence is MEQSFLPIRC…KNYKYVTVVV (148 aa).

This sequence belongs to the PurH family.

It carries out the reaction (6R)-10-formyltetrahydrofolate + 5-amino-1-(5-phospho-beta-D-ribosyl)imidazole-4-carboxamide = 5-formamido-1-(5-phospho-D-ribosyl)imidazole-4-carboxamide + (6S)-5,6,7,8-tetrahydrofolate. It catalyses the reaction IMP + H2O = 5-formamido-1-(5-phospho-D-ribosyl)imidazole-4-carboxamide. It participates in purine metabolism; IMP biosynthesis via de novo pathway; 5-formamido-1-(5-phospho-D-ribosyl)imidazole-4-carboxamide from 5-amino-1-(5-phospho-D-ribosyl)imidazole-4-carboxamide (10-formyl THF route): step 1/1. The protein operates within purine metabolism; IMP biosynthesis via de novo pathway; IMP from 5-formamido-1-(5-phospho-D-ribosyl)imidazole-4-carboxamide: step 1/1. The protein is Bifunctional purine biosynthesis protein PurH of Wigglesworthia glossinidia brevipalpis.